We begin with the raw amino-acid sequence, 569 residues long: Intraflagellar transport protein 74/72 (569 aa).

Coiled coils occupy residues Ile-75–Glu-156, Tyr-201–Asn-231, and Ala-271–His-298.

The protein belongs to the IFT74 family.

It is found in the cell projection. It localises to the cilium. The protein resides in the flagellum. The protein localises to the cytoplasm. Its subcellular location is the cytoskeleton. It is found in the flagellum axoneme. It localises to the flagellum basal body. Component of the intraflagellar transport complex B (IFT-B) involved in flagellar assembly. The sequence is that of Intraflagellar transport protein 74/72 from Giardia intestinalis (strain ATCC 50803 / WB clone C6) (Giardia lamblia).